Consider the following 155-residue polypeptide: Small ribosomal subunit protein uS7cz/uS7cy (155 aa).

It belongs to the universal ribosomal protein uS7 family. As to quaternary structure, part of the 30S ribosomal subunit.

The protein localises to the plastid. The protein resides in the chloroplast. Its function is as follows. One of the primary rRNA binding proteins, it binds directly to 16S rRNA where it nucleates assembly of the head domain of the 30S subunit. The protein is Small ribosomal subunit protein uS7cz/uS7cy (rps7-A) of Eucalyptus globulus subsp. globulus (Tasmanian blue gum).